A 115-amino-acid polypeptide reads, in one-letter code: Large ribosomal subunit protein P2z (115 aa).

The interval 62 to 115 (LASVPSGGGGGVAVASATSGGGGGGGAPAAESKKEEKKEEKEESDDDMGFSLFE) is disordered. Basic and acidic residues predominate over residues 92-102 (ESKKEEKKEEK). The residue at position 105 (Ser105) is a Phosphoserine.

The protein belongs to the eukaryotic ribosomal protein P1/P2 family. In terms of assembly, P1 and P2 exist as dimers at the large ribosomal subunit. In terms of processing, phosphorylated.

Functionally, plays an important role in the elongation step of protein synthesis. This chain is Large ribosomal subunit protein P2z (RPP2A), found in Arabidopsis thaliana (Mouse-ear cress).